The primary structure comprises 145 residues: D-aminoacyl-tRNA deacylase (145 aa).

Positions 137-138 (GP) match the Gly-cisPro motif, important for rejection of L-amino acids motif.

The protein belongs to the DTD family. Homodimer.

The protein resides in the cytoplasm. The enzyme catalyses glycyl-tRNA(Ala) + H2O = tRNA(Ala) + glycine + H(+). It catalyses the reaction a D-aminoacyl-tRNA + H2O = a tRNA + a D-alpha-amino acid + H(+). Its function is as follows. An aminoacyl-tRNA editing enzyme that deacylates mischarged D-aminoacyl-tRNAs. Also deacylates mischarged glycyl-tRNA(Ala), protecting cells against glycine mischarging by AlaRS. Acts via tRNA-based rather than protein-based catalysis; rejects L-amino acids rather than detecting D-amino acids in the active site. By recycling D-aminoacyl-tRNA to D-amino acids and free tRNA molecules, this enzyme counteracts the toxicity associated with the formation of D-aminoacyl-tRNA entities in vivo and helps enforce protein L-homochirality. This Saccharophagus degradans (strain 2-40 / ATCC 43961 / DSM 17024) protein is D-aminoacyl-tRNA deacylase.